Here is a 718-residue protein sequence, read N- to C-terminus: Polyribonucleotide nucleotidyltransferase (718 aa).

Residues Asp491 and Asp497 each contribute to the Mg(2+) site. The 60-residue stretch at 558 to 617 (PRMLTIKINPEKIRDVIGKGGATIRALTEETGTQIDISDDGTIVIASVDEGQAKEAQRRI) folds into the KH domain. The S1 motif domain maps to 627–695 (GQVYDGSVLR…EKGRLRLSVK (69 aa)).

This sequence belongs to the polyribonucleotide nucleotidyltransferase family. It depends on Mg(2+) as a cofactor.

The protein localises to the cytoplasm. It carries out the reaction RNA(n+1) + phosphate = RNA(n) + a ribonucleoside 5'-diphosphate. In terms of biological role, involved in mRNA degradation. Catalyzes the phosphorolysis of single-stranded polyribonucleotides processively in the 3'- to 5'-direction. This Bordetella avium (strain 197N) protein is Polyribonucleotide nucleotidyltransferase.